Reading from the N-terminus, the 338-residue chain is O-methyltransferase 4 (338 aa).

S-adenosyl-L-methionine-binding residues include Gly-184, Asp-207, Asn-230, Phe-231, Lys-244, and Arg-245. His-248 serves as the catalytic Proton acceptor.

The protein belongs to the class I-like SAM-binding methyltransferase superfamily. Cation-independent O-methyltransferase family. COMT subfamily.

The catalysed reaction is (3,5-dichloro-2,4,6-trihydroxyphenyl)hexan-1-one + S-adenosyl-L-methionine = 1-(3,5-dichloro-2,6-dihydroxy-4-methoxyphenyl)hexan-1-one + S-adenosyl-L-homocysteine + H(+). The protein is O-methyltransferase 4 (omt4) of Dictyostelium discoideum (Social amoeba).